The sequence spans 306 residues: SDS degradation transcriptional activation protein (306 aa).

An HTH lysR-type domain is found at 1 to 59 (MNDLRQLRHFVALAEHGHFARAAEAVNLSQPALSRSIQALENGLGCRLLDRGPRQVSLT). The segment at residues 19–38 (FARAAEAVNLSQPALSRSIQ) is a DNA-binding region (H-T-H motif).

It belongs to the LysR transcriptional regulatory family.

In terms of biological role, activates the transcription of the sdsA gene for sodium dodecyl sulfate (SDS) degradation. This is SDS degradation transcriptional activation protein (sdsB) from Pseudomonas sp. (strain ATCC 19151).